The sequence spans 233 residues: UPF0502 protein Mpe_A1449 (233 aa).

The protein belongs to the UPF0502 family.

The chain is UPF0502 protein Mpe_A1449 from Methylibium petroleiphilum (strain ATCC BAA-1232 / LMG 22953 / PM1).